We begin with the raw amino-acid sequence, 266 residues long: Probable BRI1 kinase inhibitor 1 (266 aa).

Disordered stretches follow at residues 1 to 144 (MTMN…AKTR) and 167 to 242 (FSRH…SEES). Residues 9 to 30 (RSQPPPPHPPLFKPTTPPPPPL) show a composition bias toward pro residues. A compositionally biased stretch (low complexity) spans 31 to 40 (LSTSTSTSPP). A compositionally biased stretch (polar residues) spans 77–93 (LSHNNYSSKANQHRQTG). Residues 100-109 (SKEKDREYKA) show a composition bias toward basic and acidic residues. Low complexity-rich tracts occupy residues 210–221 (LSSAPASLRASP) and 229–241 (VGGS…SSEE).

Functionally, negative regulator of brassinosteroid signaling. The polypeptide is Probable BRI1 kinase inhibitor 1 (BKI1) (Oryza sativa subsp. indica (Rice)).